Here is a 122-residue protein sequence, read N- to C-terminus: Basic phospholipase A2 CbII (122 aa).

7 disulfides stabilise this stretch: C26–C115, C28–C44, C43–C95, C49–C122, C50–C88, C57–C81, and C75–C86. Y27, G29, and G31 together coordinate Ca(2+). Residue H47 is part of the active site. D48 is a binding site for Ca(2+). Residue D89 is part of the active site.

This sequence belongs to the phospholipase A2 family. Group I subfamily. D49 sub-subfamily. Heterodimer of an acidic subunit (CbIalpha or CbIbeta) and a basic subunit (CbII). The acidic subunit is non-toxic, and increases the toxicity of the basic subunit. The cofactor is Ca(2+). Expressed by the venom gland.

The protein localises to the secreted. It catalyses the reaction a 1,2-diacyl-sn-glycero-3-phosphocholine + H2O = a 1-acyl-sn-glycero-3-phosphocholine + a fatty acid + H(+). Functionally, heterodimer: presynaptic neurotoxin. In terms of biological role, monomer: Snake venom phospholipase A2 (PLA2) that exhibits strong anticoagulant effects by binding to factor Xa (F10) and inhibiting the prothrombinase activity (IC(50) is 20 nM). PLA2 catalyzes the calcium-dependent hydrolysis of the 2-acyl groups in 3-sn-phosphoglycerides. The chain is Basic phospholipase A2 CbII from Pseudocerastes fieldi (Field's horned viper).